The sequence spans 179 residues: Large ribosomal subunit protein uL5 (179 aa).

It belongs to the universal ribosomal protein uL5 family. As to quaternary structure, part of the 50S ribosomal subunit; part of the 5S rRNA/L5/L18/L25 subcomplex. Contacts the 5S rRNA and the P site tRNA. Forms a bridge to the 30S subunit in the 70S ribosome.

This is one of the proteins that bind and probably mediate the attachment of the 5S RNA into the large ribosomal subunit, where it forms part of the central protuberance. In the 70S ribosome it contacts protein S13 of the 30S subunit (bridge B1b), connecting the 2 subunits; this bridge is implicated in subunit movement. Contacts the P site tRNA; the 5S rRNA and some of its associated proteins might help stabilize positioning of ribosome-bound tRNAs. This Buchnera aphidicola subsp. Baizongia pistaciae (strain Bp) protein is Large ribosomal subunit protein uL5.